Reading from the N-terminus, the 325-residue chain is E3 ubiquitin-protein ligase SIAH2 (325 aa).

A compositionally biased stretch (polar residues) spans 1-15 (MSRPSSTGPSANKPC). The interval 1–43 (MSRPSSTGPSANKPCSKQPPPPQTPHAPSPAAPPAAATISAAG) is disordered. A Phosphoserine modification is found at Ser-6. Ser-16 is modified (phosphoserine; by DYRK2). Positions 17–33 (KQPPPPQTPHAPSPAAP) are enriched in pro residues. Thr-24 carries the phosphothreonine; by MAPK14 modification. A Phosphoserine; by DYRK2 and MAPK14 modification is found at Ser-29. Over residues 34-43 (PAAATISAAG) the composition is skewed to low complexity. A Phosphoserine; by DYRK2 modification is found at Ser-69. An RING-type zinc finger spans residues 81-116 (CPVCFDYVLPPILQCQAGHLVCNQCRQKLSCCPTCR). At Thr-120 the chain carries Phosphothreonine; by DYRK2. Positions 131 to 323 (VASAVLFPCK…LGINVTISTC (193 aa)) are SBD. The segment at 134–194 (AVLFPCKYAT…VMSHLMHAHK (61 aa)) adopts an SIAH-type zinc-finger fold. Positions 139, 146, 158, 162, 169, 176, 188, and 193 each coordinate Zn(2+).

The protein belongs to the SINA (Seven in absentia) family. Homodimer. Interacts with VAV1, without mediating its ubiquitin-mediated degradation. Probable component of some large E3 complex possibly composed of UBE2D1, SIAH2, CACYBP/SIP, SKP1, APC and TBL1X. Interacts with UBE2I. Interacts with UBE2E2. Interacts with PEG10, which may inhibit its activity. Interacts with PEG3 and EGLN2. Interacts with DYRK2. Interacts with SNCAIP. Interacts with NR1D1 and NR1D2. Interacts with DCC. Interacts with AXIN1. In terms of processing, phosphorylated at Thr-24 and Ser-29 by MAPK14, which mediates the degradation by the proteasome of EGLN3. Phosphorylated at Ser-29 by DYRK2; this increases the ubiquitin ligase activity and promotes degradation of EGLN3. In terms of tissue distribution, detected in brain (at protein level).

It is found in the cytoplasm. It localises to the nucleus. The catalysed reaction is S-ubiquitinyl-[E2 ubiquitin-conjugating enzyme]-L-cysteine + [acceptor protein]-L-lysine = [E2 ubiquitin-conjugating enzyme]-L-cysteine + N(6)-ubiquitinyl-[acceptor protein]-L-lysine.. It participates in protein modification; protein ubiquitination. E3 ubiquitin-protein ligase that mediates ubiquitination and subsequent proteasomal degradation of target proteins. E3 ubiquitin ligases accept ubiquitin from an E2 ubiquitin-conjugating enzyme in the form of a thioester and then directly transfers the ubiquitin to targeted substrates. Mediates E3 ubiquitin ligase activity either through direct binding to substrates or by functioning as the essential RING domain subunit of larger E3 complexes. Mediates ubiquitination and proteasomal degradation of DYRK2 in response to hypoxia. Promotes monoubiquitination of SNCA. Triggers the ubiquitin-mediated degradation of many substrates, including proteins involved in transcription regulation (GPS2, POU2AF1, PML, NCOR1), a cell surface receptor (DCC), an antiapoptotic protein (BAG1), and a protein involved in synaptic vesicle function in neurons (SYP). It is thereby involved in apoptosis, tumor suppression, cell cycle, transcription and signaling processes. Has some overlapping function with SIAH1. Triggers the ubiquitin-mediated degradation of TRAF2, whereas SIAH1 does not. Regulates cellular clock function via ubiquitination of circadian transcriptional repressors NR1D1 and NR1D2 leading to their proteasomal degradation. Plays an important role in mediating the rhythmic degradation/clearance of NR1D1 and NR1D2 contributing to their circadian profile of protein abundance. Mediates ubiquitination and degradation of EGLN2 and EGLN3 in response to the unfolded protein response (UPR), leading to their degradation and subsequent stabilization of ATF4. Also part of the Wnt signaling pathway in which it mediates the Wnt-induced ubiquitin-mediated proteasomal degradation of AXIN1. The sequence is that of E3 ubiquitin-protein ligase SIAH2 (Siah2) from Rattus norvegicus (Rat).